The following is a 263-amino-acid chain: Endonuclease 8 (263 aa).

Pro2 functions as the Schiff-base intermediate with DNA in the catalytic mechanism. Glu3 (proton donor) is an active-site residue. The active-site Proton donor; for beta-elimination activity is the Lys53. The DNA site is built by Gln70, Arg125, and Asn169. The FPG-type zinc-finger motif lies at 229-263 (KVFHREGESCERCGGTIERTMLSSRPFYWCPHCQS). The active-site Proton donor; for delta-elimination activity is the Arg253.

This sequence belongs to the FPG family. Zn(2+) is required as a cofactor.

It carries out the reaction 2'-deoxyribonucleotide-(2'-deoxyribose 5'-phosphate)-2'-deoxyribonucleotide-DNA = a 3'-end 2'-deoxyribonucleotide-(2,3-dehydro-2,3-deoxyribose 5'-phosphate)-DNA + a 5'-end 5'-phospho-2'-deoxyribonucleoside-DNA + H(+). Its function is as follows. Involved in base excision repair of DNA damaged by oxidation or by mutagenic agents. Acts as a DNA glycosylase that recognizes and removes damaged bases. Has a preference for oxidized pyrimidines, such as thymine glycol, 5,6-dihydrouracil and 5,6-dihydrothymine. Has AP (apurinic/apyrimidinic) lyase activity and introduces nicks in the DNA strand. Cleaves the DNA backbone by beta-delta elimination to generate a single-strand break at the site of the removed base with both 3'- and 5'-phosphates. The polypeptide is Endonuclease 8 (Pectobacterium atrosepticum (strain SCRI 1043 / ATCC BAA-672) (Erwinia carotovora subsp. atroseptica)).